Consider the following 318-residue polypeptide: Pseudouridine-5'-phosphate glycosidase 1 (318 aa).

Glu-29 (proton donor) is an active-site residue. Residues Lys-90 and Val-110 each contribute to the substrate site. A Mn(2+)-binding site is contributed by Asp-142. Position 144-146 (144-146 (SAD)) interacts with substrate. The active-site Nucleophile is the Lys-163.

It belongs to the pseudouridine-5'-phosphate glycosidase family. In terms of assembly, homotrimer. It depends on Mn(2+) as a cofactor.

The catalysed reaction is D-ribose 5-phosphate + uracil = psi-UMP + H2O. Catalyzes the reversible cleavage of pseudouridine 5'-phosphate (PsiMP) to ribose 5-phosphate and uracil. Functions biologically in the cleavage direction, as part of a pseudouridine degradation pathway. The protein is Pseudouridine-5'-phosphate glycosidase 1 of Photorhabdus laumondii subsp. laumondii (strain DSM 15139 / CIP 105565 / TT01) (Photorhabdus luminescens subsp. laumondii).